We begin with the raw amino-acid sequence, 171 residues long: Translation initiation factor IF-3 (171 aa).

This sequence belongs to the IF-3 family. Monomer.

Its subcellular location is the cytoplasm. IF-3 binds to the 30S ribosomal subunit and shifts the equilibrium between 70S ribosomes and their 50S and 30S subunits in favor of the free subunits, thus enhancing the availability of 30S subunits on which protein synthesis initiation begins. The polypeptide is Translation initiation factor IF-3 (Listeria innocua serovar 6a (strain ATCC BAA-680 / CLIP 11262)).